A 350-amino-acid polypeptide reads, in one-letter code: MSAACWEEPWGLPGGFAKRVLVTGGAGFIASHMIVSLVEDYPNYMIINLDKLDYCASLKNLETISNKQNYKFIQGDICDSHFVKLLFETEKIDIVLHFAAQTHVDLSFVRAFEFTYVNVYGTHVLVSAAHEARVEKFIYVSTDEVYGGSLDKEFDESSPKQPTNPYASSKAAAECFVQSYWEQYKFPVVITRSSNVYGPHQYPEKVIPKFISLLQHNRKCCIHGSGLQTRNFLYATDVVEAFLTVLKKGKPGEIYNIGTNFEMSVVQLAKELIQLIKETNSESEMENWVDYVNDRPTNDMRYPMKSEKIHGLGWRPKVPWKEGIKKTIEWYRENFHNWKNVEKALEPFPV.

Residue threonine 142 participates in substrate binding. The active-site Proton donor is aspartate 143. Residues glutamate 144 and tyrosine 166 each act as proton acceptor in the active site.

The protein belongs to the NAD(P)-dependent epimerase/dehydratase family. dTDP-glucose dehydratase subfamily. Requires NAD(+) as cofactor.

It catalyses the reaction dTDP-alpha-D-glucose = dTDP-4-dehydro-6-deoxy-alpha-D-glucose + H2O. In Homo sapiens (Human), this protein is dTDP-D-glucose 4,6-dehydratase (TGDS).